The primary structure comprises 216 residues: MVKSSLQRILNSHCFAREKEGNKRNDAMPLLSIPSSSESSRASFNCCSNLGPGPRWCSDVPHPPLKIPGGRGNSQRDHNLSANLFYSDNRLNITEELTSNNRTRILNVQSSLTDGKQVSWRAVLNNNNLYIEIPSGTLPDGSKDSFAILLEYAEEQLQVDHVFICFHKNRDDRAMLLRTFRFLGFEIVIPGHPLVPKRPDACFMAYTFERDSSDED.

Belongs to the ODC antizyme family. As to quaternary structure, interacts with ODC1 and thereby sterically blocks ODC homodimerization.

Ornithine decarboxylase (ODC) antizyme protein that negatively regulates ODC activity and intracellular polyamine biosynthesis and uptake in response to increased intracellular polyamine levels. Binds to ODC monomers, inhibiting the assembly of the functional ODC homodimer, and targets the monomers for ubiquitin-independent proteolytic destruction by the 26S proteasome. The sequence is that of Ornithine decarboxylase antizyme 1 (oaz1) from Xenopus laevis (African clawed frog).